A 476-amino-acid polypeptide reads, in one-letter code: Cysteine--tRNA ligase (476 aa).

Cysteine 31 contacts Zn(2+). The short motif at 33–43 (PTVYNYAHIGN) is the 'HIGH' region element. Residues cysteine 211, histidine 236, and glutamate 240 each coordinate Zn(2+). The 'KMSKS' region motif lies at 269-273 (KMSKS). Lysine 272 is a binding site for ATP.

It belongs to the class-I aminoacyl-tRNA synthetase family. As to quaternary structure, monomer. Zn(2+) is required as a cofactor.

It is found in the cytoplasm. It catalyses the reaction tRNA(Cys) + L-cysteine + ATP = L-cysteinyl-tRNA(Cys) + AMP + diphosphate. This chain is Cysteine--tRNA ligase, found in Xanthomonas oryzae pv. oryzae (strain MAFF 311018).